The following is a 645-amino-acid chain: MDQIKIKFPDGNTKEFDKGTTTEDIAQSISPGLRKKAVAGKLNGQLIDLTRPIESDGDIEIVTPGSDEALEVLRHSTAHLMAQALKRLYGEVHFGVGPVIEGGFYYDFDMEESISSDDFEKIEKTMKQIANENYPIERKVVSRNEAKAFFSDDPYKQELIDAIPEDENVTLYTQGEFTDLCRGVHVPSTSKIKEFKLLSTAGAYWRGDSNNKMLQRIYGTAFFDKKDLKAHLQMLEERKERDHRKIGKELELFSNNPLVGAGLPLWLPNGATIRREIERYIVDKEVSMGYDHVYTPVMANVDLYKTSGHWDHYQEDMFPTMKLDEYEEMVLRPMNCPHHMMIYANKPHSYRELPIRIAELGTMHRYEASGAVSGLQRVRGMTLNDAHIFVRPDQIKEEFKRVVNLIIDVYNDFNFENYSFRLSYRDPEDKEKYFDDDEMWIKAESMLKEAVDELGLDYEEAIGEAAFYGPKLDVQVQTAMGKEETLSTAQLDFLLPQKFELTYIGNDGEQHRPVVIHRGVVSTMERFVAFLTEETKGAFPTWLAPKQVEIIPVNVDLHYDYARLIQDELKSQGVRVEIDDRNEKMGYKIREAQMQKIPYQLVVGDKEVENKEVNVRKYGSQDQETLEKDEFIWNLVDEIRLKKQR.

A TGS domain is found at 1–63; it reads MDQIKIKFPD…ESDGDIEIVT (63 aa). The tract at residues 242-540 is catalytic; the sequence is DHRKIGKELE…LTEETKGAFP (299 aa). Residues cysteine 336, histidine 387, and histidine 517 each contribute to the Zn(2+) site.

The protein belongs to the class-II aminoacyl-tRNA synthetase family. As to quaternary structure, homodimer. It depends on Zn(2+) as a cofactor.

It is found in the cytoplasm. It catalyses the reaction tRNA(Thr) + L-threonine + ATP = L-threonyl-tRNA(Thr) + AMP + diphosphate + H(+). Its function is as follows. Catalyzes the attachment of threonine to tRNA(Thr) in a two-step reaction: L-threonine is first activated by ATP to form Thr-AMP and then transferred to the acceptor end of tRNA(Thr). Also edits incorrectly charged L-seryl-tRNA(Thr). In Staphylococcus saprophyticus subsp. saprophyticus (strain ATCC 15305 / DSM 20229 / NCIMB 8711 / NCTC 7292 / S-41), this protein is Threonine--tRNA ligase.